Here is a 691-residue protein sequence, read N- to C-terminus: Elongation factor G (691 aa).

The tr-type G domain occupies 8 to 283 (EDYRNFGIMA…AVVDYLPSPA (276 aa)). GTP-binding positions include 17–24 (AHIDAGKT), 81–85 (DTPGH), and 135–138 (NKMD).

Belongs to the TRAFAC class translation factor GTPase superfamily. Classic translation factor GTPase family. EF-G/EF-2 subfamily.

It is found in the cytoplasm. Its function is as follows. Catalyzes the GTP-dependent ribosomal translocation step during translation elongation. During this step, the ribosome changes from the pre-translocational (PRE) to the post-translocational (POST) state as the newly formed A-site-bound peptidyl-tRNA and P-site-bound deacylated tRNA move to the P and E sites, respectively. Catalyzes the coordinated movement of the two tRNA molecules, the mRNA and conformational changes in the ribosome. This is Elongation factor G from Methylobacterium radiotolerans (strain ATCC 27329 / DSM 1819 / JCM 2831 / NBRC 15690 / NCIMB 10815 / 0-1).